The primary structure comprises 800 residues: Nuclear cap-binding protein subunit 1 (800 aa).

Residues 1 to 26 (MSRRRAHDTEDEGYDHRRNKRRRVSE) are disordered. Thr-9 bears the Phosphothreonine mark. An MIF4G domain is found at 31 to 243 (EDRLESLILR…CLWAQIRKLR (213 aa)). A disordered region spans residues 669–700 (LAKADSSSSDSEDDSSHKRKKPITHADKPSEE).

This sequence belongs to the NCBP1 family. As to quaternary structure, component of the nuclear cap-binding complex (CBC), a heterodimer composed of Cbp80 and Cbp20 that interacts with m7GpppG-capped RNA.

Its subcellular location is the nucleus. Functionally, component of the cap-binding complex (CBC), which binds cotranscriptionally to the 5'-cap of pre-mRNAs and is involved in various processes such as pre-mRNA splicing and RNA-mediated gene silencing (RNAi). The CBC complex is involved in miRNA-mediated RNA interference via its interaction with Ars2 and is required for primary microRNAs (miRNAs) processing. Also involved in innate immunity via the short interfering RNAs (siRNAs) processing machinery by restricting the viral RNA production. In the CBC complex, Cbp80 does not bind directly capped RNAs (m7GpppG-capped RNA) but is required to stabilize the movement of the N-terminal loop of Cbp20 and lock the CBC into a high affinity cap-binding state with the cap structure. In Drosophila sechellia (Fruit fly), this protein is Nuclear cap-binding protein subunit 1 (Cbp80).